Consider the following 860-residue polypeptide: MTIVVFATEYDAANVIFSILCRSPSEHLIFPIIVKYKPSNNVSFCLQTQKCKNSKRIDTVFVCHAEKLNLSHYIQTASPIKAEDVANSLNDKETESLYVDMILSQTGKEREDVEFKYMAYFHKSLIIKYLTGKFLLPTSPFWFLSTYGQTEGMLLLTMFYYLFEEQKSTITTTKNYVQCFTENTGNMVFTYSSMSEFINITLKSKFRKLFADFSTYARQKNLRDKEEFKHLDTQINLFRKSSHLTNTFRVHYIYIAYNTALETTKFVNYCNLTSYDSNLPIGQQCQRNLHILGNSLHENLLCIMKQYFNADCYFKTYIDIKRLKNPNLNVTEYEYALVSKKKTIQALTSEQITRAIAKCNKNGEGLFSPVKPGLQGLLEISASDRYVQIQDKRIYRRQHLHKDYHRPFPVFRVQLLHKNIFCFGNSEDWYENMGFNRILQYLPDEYISDEALTRAIWLQDTHFLCDDVEKQFYTTRHEIFNERIPVTNYIGDLDLPLQDTATITEETFFSMCRLIRLTLINAWKKIFPSIDTDTHPIFFFKTQCDTTNDTLDYTEDPTEIKQFCVCRKKIGLRISIPLPNGTAIAGGEPLKQLSKILNHVMCLDQELSQILNSITFPGECFDIGIYHTGHCIRIGYMYKTDMDKGKMLHGRLTPIFIVPEGYRNSCKTFIQMQMDLNNLLHHGTKKAPIEELIYNITDKGCPKENLSFMDLKSRQLWNKVNIATETLITKYLNTHGFNNNATSADDSLLSFIRLIGWPIIKTQLITHYETRIAQQFSQVTFIKIDSKNLQIKKTQFGRVSDFSCLNRQHRGNRDNVLVYIQLKADGNRLILILWSTCFATKCQSNSKQVHCSIALEQLKN.

The CHC2-type zinc finger occupies 804-842; it reads CLNRQHRGNRDNVLVYIQLKADGNRLILILWSTCFATKC.

This sequence belongs to the herpesviridae DNA primase family. As to quaternary structure, associates with the helicase and the primase-associated factor to form the helicase-primase factor.

Its subcellular location is the host nucleus. Its function is as follows. Essential component of the helicase/primase complex. Unwinds the DNA at the replication forks and generates single-stranded DNA for both leading and lagging strand synthesis. The primase initiates primer synthesis and thereby produces large amount of short RNA primers on the lagging strand that the polymerase elongates using dNTPs. This chain is DNA primase (U43), found in Homo sapiens (Human).